Here is a 436-residue protein sequence, read N- to C-terminus: RNA polymerase sigma-54 factor (436 aa).

Residues 324 to 343 constitute a DNA-binding region (H-T-H motif); it reads TLREVADCLSLHESTVSRAI. Residues 413 to 421 carry the RPON box motif; that stretch reads SRRTVAKYR.

Belongs to the sigma-54 factor family. In terms of assembly, interacts transiently with the RNAP core.

In terms of biological role, sigma factors are initiation factors that promote the attachment of RNA polymerase (RNAP) to specific initiation sites and are then released. This sigma factor is responsible for the expression of the levanase operon. The open complex (sigma-54 and core RNA polymerase) serves as the receptor for receipt of the melting signal from the remotely bound activator protein LevR for the expression of the levanase operon. Associates with the RNAP core only in stationary phase cells. This is RNA polymerase sigma-54 factor (sigL) from Bacillus subtilis (strain 168).